The sequence spans 2299 residues: Protein Ycf2 (2299 aa).

Residue 1642-1649 (GSIGTGRS) coordinates ATP.

It belongs to the Ycf2 family.

The protein localises to the plastid. Its subcellular location is the chloroplast stroma. In terms of biological role, probable ATPase of unknown function. Its presence in a non-photosynthetic plant (Epifagus virginiana) and experiments in tobacco indicate that it has an essential function which is probably not related to photosynthesis. The sequence is that of Protein Ycf2 from Nandina domestica (Heavenly bamboo).